The primary structure comprises 304 residues: UTP--glucose-1-phosphate uridylyltransferase 1 (304 aa).

This sequence belongs to the UDPGP type 2 family.

The catalysed reaction is alpha-D-glucose 1-phosphate + UTP + H(+) = UDP-alpha-D-glucose + diphosphate. It functions in the pathway carbohydrate metabolism; nucleotide-sugar metabolism. This chain is UTP--glucose-1-phosphate uridylyltransferase 1 (hasC1), found in Streptococcus pyogenes serotype M1.